Here is a 407-residue protein sequence, read N- to C-terminus: GTPase Obg (407 aa).

Positions 1 to 159 (MKFVDEVSIR…RDLKLEMKVL (159 aa)) constitute an Obg domain. The interval 128-148 (TRFKSSTNRAPRQTTPGKPGE) is disordered. Polar residues predominate over residues 129–143 (RFKSSTNRAPRQTTP). The OBG-type G domain maps to 160–333 (ADVGLLGLPN…LTRDIMRYLE (174 aa)). Residues 166-173 (GLPNAGKS), 191-195 (FTTLV), 213-216 (DIPG), 283-286 (NKCD), and 314-316 (SAI) each bind GTP. Mg(2+) is bound by residues Ser173 and Thr193. The interval 376 to 407 (SGVKSVHDIGDDDWDEEDVDDEDGPEIIYVRD) is disordered. Positions 385–400 (GDDDWDEEDVDDEDGP) are enriched in acidic residues.

It belongs to the TRAFAC class OBG-HflX-like GTPase superfamily. OBG GTPase family. In terms of assembly, monomer. It depends on Mg(2+) as a cofactor.

It is found in the cytoplasm. Its function is as follows. An essential GTPase which binds GTP, GDP and possibly (p)ppGpp with moderate affinity, with high nucleotide exchange rates and a fairly low GTP hydrolysis rate. Plays a role in control of the cell cycle, stress response, ribosome biogenesis and in those bacteria that undergo differentiation, in morphogenesis control. This is GTPase Obg from Pseudomonas fluorescens (strain Pf0-1).